The chain runs to 161 residues: 2-C-methyl-D-erythritol 2,4-cyclodiphosphate synthase (161 aa).

Residues Asp9 and His11 each contribute to the a divalent metal cation site. 4-CDP-2-C-methyl-D-erythritol 2-phosphate-binding positions include 9 to 11 (DFH) and 37 to 38 (HS). A divalent metal cation is bound at residue His45. 4-CDP-2-C-methyl-D-erythritol 2-phosphate-binding positions include 59–61 (DIG), 64–68 (FPDTD), 135–138 (TTTE), and Arg145.

Belongs to the IspF family. In terms of assembly, homotrimer. A divalent metal cation is required as a cofactor.

It carries out the reaction 4-CDP-2-C-methyl-D-erythritol 2-phosphate = 2-C-methyl-D-erythritol 2,4-cyclic diphosphate + CMP. The protein operates within isoprenoid biosynthesis; isopentenyl diphosphate biosynthesis via DXP pathway; isopentenyl diphosphate from 1-deoxy-D-xylulose 5-phosphate: step 4/6. Its function is as follows. Involved in the biosynthesis of isopentenyl diphosphate (IPP) and dimethylallyl diphosphate (DMAPP), two major building blocks of isoprenoid compounds. Catalyzes the conversion of 4-diphosphocytidyl-2-C-methyl-D-erythritol 2-phosphate (CDP-ME2P) to 2-C-methyl-D-erythritol 2,4-cyclodiphosphate (ME-CPP) with a corresponding release of cytidine 5-monophosphate (CMP). The chain is 2-C-methyl-D-erythritol 2,4-cyclodiphosphate synthase from Leptospira interrogans serogroup Icterohaemorrhagiae serovar Lai (strain 56601).